The sequence spans 187 residues: Pseudo histidine-containing phosphotransfer protein 1 (187 aa).

Positions Ser74–Tyr169 constitute an HPt domain.

Its function is as follows. Functions as a two-component phosphorelay mediator between cytokinin sensor histidine kinases and response regulators (B-type ARRs). Plays an important role in propagating cytokinin signal transduction. This is Pseudo histidine-containing phosphotransfer protein 1 from Oryza sativa subsp. japonica (Rice).